A 248-amino-acid polypeptide reads, in one-letter code: ATP synthase subunit a (248 aa).

6 helical membrane-spanning segments follow: residues 34–54 (TNVT…LVAG), 91–111 (YFPY…LGLI), 121–141 (IAVT…IGFV), 147–167 (FLSL…LAVI), 197–217 (FAGF…VMAI), and 220–240 (LEVL…CVYL).

Belongs to the ATPase A chain family. F-type ATPases have 2 components, CF(1) - the catalytic core - and CF(0) - the membrane proton channel. CF(1) has five subunits: alpha(3), beta(3), gamma(1), delta(1), epsilon(1). CF(0) has four main subunits: a, b, b' and c.

The protein localises to the cell inner membrane. Key component of the proton channel; it plays a direct role in the translocation of protons across the membrane. This Dinoroseobacter shibae (strain DSM 16493 / NCIMB 14021 / DFL 12) protein is ATP synthase subunit a.